Here is a 1781-residue protein sequence, read N- to C-terminus: Atrochrysone carboxylic acid synthase (1781 aa).

The interval 15-253 (TRDLFRRLHV…KHVALPVYAG (239 aa)) is N-terminal acylcarrier protein transacylase domain (SAT). Positions 390 to 823 (QSKIAIVGMA…GGNTSVVVEE (434 aa)) constitute a Ketosynthase family 3 (KS3) domain. Catalysis depends on for beta-ketoacyl synthase activity residues C563, H698, and H741. Positions 925 to 1244 (FAFTGQGASH…SLGLLHCAGL (320 aa)) are malonyl-CoA:ACP transacylase (MAT) domain. The tract at residues 1312–1631 (TSTVQQIIEE…RVLLNRFFSA (320 aa)) is product template (PT) domain. Residues 1316 to 1451 (QQIIEETFSD…ADIVYGLPTD (136 aa)) are N-terminal hotdog fold. Residues 1316–1626 (QQIIEETFSD…FRRYPRVLLN (311 aa)) form the PKS/mFAS DH domain. The active-site Proton acceptor; for dehydratase activity is the H1348. The segment at 1478–1626 (IANRLSHNMA…FRRYPRVLLN (149 aa)) is C-terminal hotdog fold. Residue D1537 is the Proton donor; for dehydratase activity of the active site. Residues 1633-1653 (DSDTSKHTSATDVSPPKKVVQ) are disordered. The Carrier domain maps to 1703 to 1780 (VDSDSTASKA…DLKAWLMEYY (78 aa)). S1740 carries the post-translational modification O-(pantetheine 4'-phosphoryl)serine.

The enzyme catalyses holo-[ACP] + 8 malonyl-CoA + 8 H(+) = atrochrysone carboxyl-[ACP] + 8 CO2 + 8 CoA + 2 H2O. It functions in the pathway secondary metabolite biosynthesis. Functionally, atrochrysone carboxylic acid synthase; part of the gene cluster that mediates the biosynthesis of the dimeric xanthones cryptosporioptides. The pathway begins with the synthesis of atrochrysone thioester by the polyketide synthase dmx-nrPKS. The atrochrysone carboxyl ACP thioesterase dmxR1 then breaks the thioester bond and releases the atrochrysone carboxylic acid from dmx-nrPKS. Atrochrysone carboxylic acid is decarboxylated by the decarboxylase dmxR15, and oxidized by the anthrone oxygenase dmxR16 to yield emodin. Emodin is then reduced to emodin hydroquinone by the oxidoreductase dmxR7. A-ring reduction by the short chain dehydrogenase dmxR18, dehydration by the scytalone dehydratase-like protein dmxR17 and probable spontaneous re-oxidation, results in overall deoxygenation to chrysophanol. Baeyer-Villiger oxidation by the Baeyer-Villiger monooxygenase (BVMO) dmxR6 then yields monodictylactone in equilibrium with monodictyphenone. In the case of the cryptosporioptides biosynthesis, monodictylactone is reduced at C-12 to an alcohol (by the short chain dehydrogenases dmxR12 or dmxR8) and hydroxylated at C-5 by dmxR9, yielding the electron-rich aromatic which could eliminate H(2)O to form the ortho-quinonemethide, followed by tautomerisation to paraquinone and complete the formal reduction to produce the 10-methylgroup. Conjugate addition of C-4a-OH to the resulting paraquinone by the monooxygenase dmxR10 then gives cyclohexadienone, which is then reduced at C-5 by the short chain dehydrogenase dmxR3 to give the dihydroxanthone. The 6,7-epoxide in the cryptosporioptides could be introduced by the cytochrome P450 monooxygenase dmxL3. The highly reducing PKS dmxL2 manufactures butyrate, which is further carboxylated by dmxL1 to form ethylmalonate. It is not yet clear whether the carboxylation occurs while the butyrate is attached to the ACP of dmxL2, but this unusual fungal metabolite could then be esterified to O-5 by the O-acetyltransferase dmxR13. Finally, dimerization performed by dmxR5 gives the observed dimers cryptosporioptides A, B and C as the final products of the pathway. The polypeptide is Atrochrysone carboxylic acid synthase (Cryptosporiopsis sp. (strain 8999)).